A 237-amino-acid polypeptide reads, in one-letter code: Segregation and condensation protein A (237 aa).

It belongs to the ScpA family. In terms of assembly, component of a cohesin-like complex composed of ScpA, ScpB and the Smc homodimer, in which ScpA and ScpB bind to the head domain of Smc. The presence of the three proteins is required for the association of the complex with DNA.

It is found in the cytoplasm. Participates in chromosomal partition during cell division. May act via the formation of a condensin-like complex containing Smc and ScpB that pull DNA away from mid-cell into both cell halves. This Streptococcus thermophilus (strain CNRZ 1066) protein is Segregation and condensation protein A.